Consider the following 505-residue polypeptide: Maturase K (505 aa).

The protein belongs to the intron maturase 2 family. MatK subfamily.

It localises to the plastid. The protein resides in the chloroplast. Its function is as follows. Usually encoded in the trnK tRNA gene intron. Probably assists in splicing its own and other chloroplast group II introns. This Nuphar advena (Common spatterdock) protein is Maturase K.